Consider the following 721-residue polypeptide: Probable acyl-activating enzyme 17, peroxisomal (721 aa).

Residues 719-721 (SKL) carry the Microbody targeting signal motif.

The protein belongs to the ATP-dependent AMP-binding enzyme family. In terms of tissue distribution, expressed in leaves, stems and developing seeds.

The protein localises to the peroxisome. Its function is as follows. May act as an acid--thiol ligase that activates carboxylic acids by forming acyl-CoAs. In Arabidopsis thaliana (Mouse-ear cress), this protein is Probable acyl-activating enzyme 17, peroxisomal (AAE17).